A 219-amino-acid polypeptide reads, in one-letter code: Dynein light chain Tctex-type 4 (219 aa).

A disordered region spans residues 1–84; it reads MAGRPVPAGR…RRPSLGPVPP (84 aa). Over residues 10–20 the composition is skewed to basic and acidic residues; the sequence is RQEEELAKDPG. Ser-64 is modified (phosphoserine).

This sequence belongs to the dynein light chain Tctex-type family. Interacts with ENG/endoglin, TGFBR2 and TGFBR3. Interacts with PPP1CC.

The protein resides in the cell projection. It localises to the cilium. It is found in the flagellum. The protein localises to the cytoplasmic vesicle. Its subcellular location is the secretory vesicle. The protein resides in the acrosome. It localises to the cytoplasm. It is found in the cytoskeleton. The protein localises to the cilium axoneme. Its subcellular location is the nucleus. The protein resides in the microtubule organizing center. This chain is Dynein light chain Tctex-type 4 (DYNLT4), found in Sus scrofa (Pig).